A 181-amino-acid chain; its full sequence is RNA pyrophosphohydrolase (181 aa).

Residues 6-150 (GYRPNVGIII…KCEVYRCALK (145 aa)) enclose the Nudix hydrolase domain. The short motif at 38–59 (GGIKEGETPEQAMYRELYEEVG) is the Nudix box element.

The protein belongs to the Nudix hydrolase family. RppH subfamily. The cofactor is a divalent metal cation.

Its function is as follows. Accelerates the degradation of transcripts by removing pyrophosphate from the 5'-end of triphosphorylated RNA, leading to a more labile monophosphorylated state that can stimulate subsequent ribonuclease cleavage. The polypeptide is RNA pyrophosphohydrolase (Psychromonas ingrahamii (strain DSM 17664 / CCUG 51855 / 37)).